Reading from the N-terminus, the 260-residue chain is COP9 signalosome complex subunit 7 (260 aa).

A PCI domain is found at 1-159 (MDIEQKQAEI…RCFEVPFAAG (159 aa)). Residues 228–260 (IRGNKEMFGEPSGVMDYEEDGIRPKRRRHPVTR) are disordered. Residues 251-260 (PKRRRHPVTR) show a composition bias toward basic residues.

It belongs to the CSN7/EIF3M family. CSN7 subfamily. As to quaternary structure, component of the CSN complex, probably composed of CSN1, CSN2, CSN3, CSN4, CSN5 (CSN5A or CSN5B), CSN6 (CSN6A or CSN6B), CSN7 and CSN8. In the CSN complex, it probably interacts directly with CSN4. Interacts (via PCI domain) with CSN1 (via PCI domain) and CSN8 (via PCI domain), and (via C-terminal tail) with CSN6A, TSO2 and RNR2A. Cannot interact simultaneously with CSN1 and CSN8 to form ternary complexes. Also exists as a monomeric form. Binds to the translation initiation factors TIF3E1 and TIF3H1. In terms of processing, phosphorylated.

It is found in the cytoplasm. The protein resides in the nucleus. In terms of biological role, component of the COP9 signalosome complex (CSN), a complex involved in various cellular and developmental processes such as photomorphogenesis and auxin and jasmonate responses. The CSN complex is an essential regulator of the ubiquitin (Ubl) conjugation pathway by mediating the deneddylation of the cullin subunits of SCF-type E3 ligase complexes, leading to decrease the Ubl ligase activity of SCF. It is involved in repression of photomorphogenesis in darkness by regulating the activity of COP1-containing Ubl ligase complexes. The complex is also required for degradation of IAA6 by regulating the activity of the Ubl ligase SCF-TIR complex. Regulates the TSO2 subcellular localization. May be involved in nucleic acid binding. This chain is COP9 signalosome complex subunit 7 (CSN7), found in Arabidopsis thaliana (Mouse-ear cress).